A 386-amino-acid polypeptide reads, in one-letter code: Succinate--CoA ligase [ADP-forming] subunit beta (386 aa).

The ATP-grasp domain maps to 9–244; that stretch reads KEILRKYGVP…HDEEDPLETR (236 aa). Residues lysine 46, 53–55, glutamate 99, cysteine 102, and glutamate 107 each bind ATP; that span reads GRG. Residues asparagine 199 and aspartate 213 each coordinate Mg(2+). Residues asparagine 264 and 321–323 contribute to the substrate site; that span reads GIM.

The protein belongs to the succinate/malate CoA ligase beta subunit family. In terms of assembly, heterotetramer of two alpha and two beta subunits. Mg(2+) serves as cofactor.

The catalysed reaction is succinate + ATP + CoA = succinyl-CoA + ADP + phosphate. The enzyme catalyses GTP + succinate + CoA = succinyl-CoA + GDP + phosphate. The protein operates within carbohydrate metabolism; tricarboxylic acid cycle; succinate from succinyl-CoA (ligase route): step 1/1. In terms of biological role, succinyl-CoA synthetase functions in the citric acid cycle (TCA), coupling the hydrolysis of succinyl-CoA to the synthesis of either ATP or GTP and thus represents the only step of substrate-level phosphorylation in the TCA. The beta subunit provides nucleotide specificity of the enzyme and binds the substrate succinate, while the binding sites for coenzyme A and phosphate are found in the alpha subunit. This Rickettsia massiliae (strain Mtu5) protein is Succinate--CoA ligase [ADP-forming] subunit beta.